A 569-amino-acid chain; its full sequence is Proline--tRNA ligase (569 aa).

This sequence belongs to the class-II aminoacyl-tRNA synthetase family. ProS type 1 subfamily. As to quaternary structure, homodimer.

The protein resides in the cytoplasm. It catalyses the reaction tRNA(Pro) + L-proline + ATP = L-prolyl-tRNA(Pro) + AMP + diphosphate. Catalyzes the attachment of proline to tRNA(Pro) in a two-step reaction: proline is first activated by ATP to form Pro-AMP and then transferred to the acceptor end of tRNA(Pro). As ProRS can inadvertently accommodate and process non-cognate amino acids such as alanine and cysteine, to avoid such errors it has two additional distinct editing activities against alanine. One activity is designated as 'pretransfer' editing and involves the tRNA(Pro)-independent hydrolysis of activated Ala-AMP. The other activity is designated 'posttransfer' editing and involves deacylation of mischarged Ala-tRNA(Pro). The misacylated Cys-tRNA(Pro) is not edited by ProRS. The sequence is that of Proline--tRNA ligase from Nitratiruptor sp. (strain SB155-2).